Reading from the N-terminus, the 954-residue chain is Glycine dehydrogenase (decarboxylating) (954 aa).

K700 is subject to N6-(pyridoxal phosphate)lysine.

This sequence belongs to the GcvP family. The glycine cleavage system is composed of four proteins: P, T, L and H. The cofactor is pyridoxal 5'-phosphate.

It carries out the reaction N(6)-[(R)-lipoyl]-L-lysyl-[glycine-cleavage complex H protein] + glycine + H(+) = N(6)-[(R)-S(8)-aminomethyldihydrolipoyl]-L-lysyl-[glycine-cleavage complex H protein] + CO2. Functionally, the glycine cleavage system catalyzes the degradation of glycine. The P protein binds the alpha-amino group of glycine through its pyridoxal phosphate cofactor; CO(2) is released and the remaining methylamine moiety is then transferred to the lipoamide cofactor of the H protein. This is Glycine dehydrogenase (decarboxylating) from Dinoroseobacter shibae (strain DSM 16493 / NCIMB 14021 / DFL 12).